The sequence spans 152 residues: MSTLVTCSLPGAVTTHASTRRFGGSQFQTSQASCISFKREVSAKAVLRSVRCNATQTQSAQRKSSTATVKRSDPKGKIQGPKLDDGSGGFPPFRFGKGGGGGGGGGGGSNYFGGFLLFTCVLLLDYLKEFEKNLIARRQRAGYDANNDMFQQ.

The transit peptide at 1 to 52 (MSTLVTCSLPGAVTTHASTRRFGGSQFQTSQASCISFKREVSAKAVLRSVRC) directs the protein to the mitochondrion. Polar residues predominate over residues 52–69 (CNATQTQSAQRKSSTATV). The interval 52–99 (CNATQTQSAQRKSSTATVKRSDPKGKIQGPKLDDGSGGFPPFRFGKGG) is disordered.

It is found in the mitochondrion. Functionally, restores fertility in rice varieties with LD-type cytoplasmic male sterility (CMS). CMS is caused by genetic incompatibility between nuclei and mitochondria within male reproductive organs. Corresponds to the functional allele of RF2, which is dependent of the presence of Ile-78 in the japonica cultivars Fukuyama and Owarihatamochi (AC F1SZ42), and indica cultivar Kasalath (AC F1SZ41). Non-functional RF2 alleles are found in japonica cultivars Taichung 65 and Nipponbare (AC F1SZ44), where Ile-78 is replaced by Thr-78. This is Protein FERTILITY RESTORER RF2, mitochondrial from Oryza sativa subsp. japonica (Rice).